The sequence spans 101 residues: Small ribosomal subunit protein uS14 (101 aa).

Residues 1 to 26 (MAKVSSIQKNKSRQKKSQSLHNKRSE) are disordered. The segment covering 10 to 22 (NKSRQKKSQSLHN) has biased composition (basic residues).

This sequence belongs to the universal ribosomal protein uS14 family. In terms of assembly, part of the 30S ribosomal subunit. Contacts proteins S3 and S10.

Its function is as follows. Binds 16S rRNA, required for the assembly of 30S particles and may also be responsible for determining the conformation of the 16S rRNA at the A site. The chain is Small ribosomal subunit protein uS14 from Rickettsia prowazekii (strain Madrid E).